Reading from the N-terminus, the 499-residue chain is Putative antiporter subunit mnhD2 (499 aa).

Helical transmembrane passes span 3-23, 33-53, 79-99, 109-129, 131-151, 162-182, 210-230, 241-261, 272-292, 309-329, 331-351, 370-390, 404-424, and 452-472; these read LSNL…ILVF, YLYL…LIYV, LSLI…AYGF, YHLP…FLTS, LFNL…LITL, IIYV…IGLL, ISLI…FMWL, LAAL…IRFF, IHPL…IGVI, IGFI…GAIF, LVND…LVYI, FGVA…FSGF, GNYI…YSLF, and ILSI…VVLN.

The protein belongs to the CPA3 antiporters (TC 2.A.63) subunit D family. May form a heterooligomeric complex that consists of seven subunits: mnhA2, mnhB2, mnhC2, mnhD2, mnhE2, mnhF2 and mnhG2.

Its subcellular location is the cell membrane. Its function is as follows. Expression of the mnh2 operon in E.coli is not able to catalyze Na(+)Li(+)/H(+) antiport. It does however confer higher growth rates than the control strain at up to pH 9.5. The operon may encode an NADH-ubiquinone oxidoreductase. This chain is Putative antiporter subunit mnhD2 (mnhD2), found in Staphylococcus aureus.